Consider the following 350-residue polypeptide: tRNA uridine(34) hydroxylase (350 aa).

Residues 146–240 enclose the Rhodanese domain; the sequence is DDPDAVFIDM…YARRAREQGL (95 aa). Cys200 functions as the Cysteine persulfide intermediate in the catalytic mechanism. Basic and acidic residues predominate over residues 319–328; sequence RRRRAGRENG. The segment at 319–350 is disordered; the sequence is RRRRAGRENGNKIFNKSRGRLNSKLSIPDPAE.

It belongs to the TrhO family.

It carries out the reaction uridine(34) in tRNA + AH2 + O2 = 5-hydroxyuridine(34) in tRNA + A + H2O. Its function is as follows. Catalyzes oxygen-dependent 5-hydroxyuridine (ho5U) modification at position 34 in tRNAs. This chain is tRNA uridine(34) hydroxylase, found in Salmonella schwarzengrund (strain CVM19633).